The sequence spans 241 residues: Endonuclease NucS (241 aa).

It belongs to the NucS endonuclease family.

Its subcellular location is the cytoplasm. Its function is as follows. Cleaves both 3' and 5' ssDNA extremities of branched DNA structures. This is Endonuclease NucS from Corynebacterium jeikeium (strain K411).